We begin with the raw amino-acid sequence, 194 residues long: Small ribosomal subunit protein uS4c (194 aa).

One can recognise an S4 RNA-binding domain in the interval 82–143 (MRLDNILFRL…KERSKVLIQN (62 aa)).

Belongs to the universal ribosomal protein uS4 family. In terms of assembly, part of the 30S ribosomal subunit. Contacts protein S5. The interaction surface between S4 and S5 is involved in control of translational fidelity.

The protein localises to the plastid. The protein resides in the chloroplast. Its function is as follows. One of the primary rRNA binding proteins, it binds directly to 16S rRNA where it nucleates assembly of the body of the 30S subunit. With S5 and S12 plays an important role in translational accuracy. The chain is Small ribosomal subunit protein uS4c (rps4) from Trimezia steyermarkii (Steyermark's trimezia).